The sequence spans 312 residues: MRFEHKDILDMESLSVQDITMILDTAEGMKEISKRPVKKVPTLRGKTIVLLFQEPSTRTKSSFDIAAKRLSADSISLSKSTSSIVKGETLIDTARNLEAMNPDIIVLRHPSSGAPHLIAKHVNASVINAGDGIHAHPSQTLLDLMSVREKKGELQGLNISIVGDISHSRVARSNITGFTKMGANVTISAPATMIPRGIEALGCKVAPDMDSCIENADVIIMLRIQKERQENILFPTEREYAALFGLNAQRLKLAKPDVIVMHPGPLNRGVEISNQVADGRNSVILDQVTNGVAVRMALFYLVAGGSRNADTI.

Residues arginine 58 and threonine 59 each contribute to the carbamoyl phosphate site. Lysine 86 is a binding site for L-aspartate. Arginine 108, histidine 136, and glutamine 139 together coordinate carbamoyl phosphate. The L-aspartate site is built by arginine 169 and arginine 223. Carbamoyl phosphate contacts are provided by glycine 264 and proline 265.

Belongs to the aspartate/ornithine carbamoyltransferase superfamily. ATCase family. Heterododecamer (2C3:3R2) of six catalytic PyrB chains organized as two trimers (C3), and six regulatory PyrI chains organized as three dimers (R2).

It carries out the reaction carbamoyl phosphate + L-aspartate = N-carbamoyl-L-aspartate + phosphate + H(+). Its pathway is pyrimidine metabolism; UMP biosynthesis via de novo pathway; (S)-dihydroorotate from bicarbonate: step 2/3. In terms of biological role, catalyzes the condensation of carbamoyl phosphate and aspartate to form carbamoyl aspartate and inorganic phosphate, the committed step in the de novo pyrimidine nucleotide biosynthesis pathway. This Desulforapulum autotrophicum (strain ATCC 43914 / DSM 3382 / VKM B-1955 / HRM2) (Desulfobacterium autotrophicum) protein is Aspartate carbamoyltransferase catalytic subunit.